We begin with the raw amino-acid sequence, 156 residues long: S-ribosylhomocysteine lyase (156 aa).

Residues His54, His58, and Cys123 each contribute to the Fe cation site.

Belongs to the LuxS family. Homodimer. Fe cation is required as a cofactor.

The enzyme catalyses S-(5-deoxy-D-ribos-5-yl)-L-homocysteine = (S)-4,5-dihydroxypentane-2,3-dione + L-homocysteine. In terms of biological role, involved in the synthesis of autoinducer 2 (AI-2) which is secreted by bacteria and is used to communicate both the cell density and the metabolic potential of the environment. The regulation of gene expression in response to changes in cell density is called quorum sensing. Catalyzes the transformation of S-ribosylhomocysteine (RHC) to homocysteine (HC) and 4,5-dihydroxy-2,3-pentadione (DPD). The chain is S-ribosylhomocysteine lyase from Ligilactobacillus salivarius (strain UCC118) (Lactobacillus salivarius).